A 908-amino-acid chain; its full sequence is NADH-quinone oxidoreductase subunit G (908 aa).

In terms of domain architecture, 2Fe-2S ferredoxin-type spans 2–83 (ATIHVDGKEY…GTFISIDDEE (82 aa)). Positions 34, 45, 48, and 67 each coordinate [2Fe-2S] cluster. Residues 83–122 (EAKQFRESVVEWLMTNHPHDCPVCEEGGNCHLQDMTVMTG) enclose the 4Fe-4S His(Cys)3-ligated-type domain. [4Fe-4S] cluster-binding residues include H99, C103, C106, C112, C151, C154, C157, C201, C228, C231, C235, and C263. The 4Fe-4S Mo/W bis-MGD-type domain maps to 221–277 (MQFAPSICQQCSIGCNISPGERYGELRRIENRYNGTVNHYFLCDRGRFGYGYVNLKD).

This sequence belongs to the complex I 75 kDa subunit family. As to quaternary structure, composed of 13 different subunits. Subunits NuoCD, E, F, and G constitute the peripheral sector of the complex. [2Fe-2S] cluster is required as a cofactor. [4Fe-4S] cluster serves as cofactor.

The enzyme catalyses a quinone + NADH + 5 H(+)(in) = a quinol + NAD(+) + 4 H(+)(out). NDH-1 shuttles electrons from NADH, via FMN and iron-sulfur (Fe-S) centers, to quinones in the respiratory chain. The immediate electron acceptor for the enzyme in this species is believed to be ubiquinone. Couples the redox reaction to proton translocation (for every two electrons transferred, four hydrogen ions are translocated across the cytoplasmic membrane), and thus conserves the redox energy in a proton gradient. The chain is NADH-quinone oxidoreductase subunit G (nuoG) from Escherichia coli O6:H1 (strain CFT073 / ATCC 700928 / UPEC).